Reading from the N-terminus, the 457-residue chain is Omega-hydroxypalmitate O-feruloyl transferase (457 aa).

Active-site proton acceptor residues include histidine 184 and aspartate 404.

It belongs to the plant acyltransferase family. As to expression, expressed in roots, seedlings, leaves, stems, flowers and siliques. Detected at the protein level in roots and in seed coats.

It carries out the reaction 16-hydroxyhexadecanoate + (E)-feruloyl-CoA = 16-feruloyloxyhexadecanoate + CoA. Functionally, involved in the synthesis of aromatics of the suberin polymer. Specifically affects the accumulation of the ferulate constituent of suberin in roots and seeds, but has no effect on the content of p-coumarate or sinapate. The polypeptide is Omega-hydroxypalmitate O-feruloyl transferase (HHT1) (Arabidopsis thaliana (Mouse-ear cress)).